A 670-amino-acid chain; its full sequence is DNA ligase (670 aa).

Residues 33 to 37 (DAEYD), 82 to 83 (SL), and Glu114 each bind NAD(+). Lys116 serves as the catalytic N6-AMP-lysine intermediate. Positions 137, 174, 291, and 315 each coordinate NAD(+). Cys409, Cys412, Cys427, and Cys433 together coordinate Zn(2+). Residues 593-670 (GAELPLEGKT…TEQDLLELIN (78 aa)) enclose the BRCT domain.

This sequence belongs to the NAD-dependent DNA ligase family. LigA subfamily. Mg(2+) serves as cofactor. Requires Mn(2+) as cofactor.

The catalysed reaction is NAD(+) + (deoxyribonucleotide)n-3'-hydroxyl + 5'-phospho-(deoxyribonucleotide)m = (deoxyribonucleotide)n+m + AMP + beta-nicotinamide D-nucleotide.. DNA ligase that catalyzes the formation of phosphodiester linkages between 5'-phosphoryl and 3'-hydroxyl groups in double-stranded DNA using NAD as a coenzyme and as the energy source for the reaction. It is essential for DNA replication and repair of damaged DNA. The chain is DNA ligase from Vibrio parahaemolyticus serotype O3:K6 (strain RIMD 2210633).